Consider the following 265-residue polypeptide: Mlc titration factor A (265 aa).

Zn(2+) is bound by residues His-111, His-148, His-152, and Glu-211.

Belongs to the MtfA family. Interacts with Mlc. Requires Zn(2+) as cofactor.

The protein localises to the cytoplasm. Functionally, involved in the modulation of the activity of the glucose-phosphotransferase system (glucose-PTS). Interacts with the transcriptional repressor Mlc, preventing its interaction with DNA and leading to the modulation of expression of genes regulated by Mlc, including ptsG, which encodes the PTS system glucose-specific EIICB component. Shows zinc-dependent metallopeptidase activity. The chain is Mlc titration factor A from Escherichia fergusonii.